We begin with the raw amino-acid sequence, 270 residues long: uncharacterized protein (270 aa).

The 233-residue stretch at 34–266 (LIARGLTKSY…PDVRRLYLGD (233 aa)) folds into the ABC transporter domain. 66–73 (GPNGAGKT) is a binding site for ATP.

Belongs to the ABC transporter superfamily.

This is an uncharacterized protein from Rhizobium meliloti (strain 1021) (Ensifer meliloti).